A 102-amino-acid chain; its full sequence is Small ribosomal subunit protein uS10 (102 aa).

Belongs to the universal ribosomal protein uS10 family. Part of the 30S ribosomal subunit.

Involved in the binding of tRNA to the ribosomes. This is Small ribosomal subunit protein uS10 from Streptomyces griseus subsp. griseus (strain JCM 4626 / CBS 651.72 / NBRC 13350 / KCC S-0626 / ISP 5235).